The chain runs to 494 residues: Lysine--tRNA ligase (494 aa).

Residues Glu-407 and Glu-414 each coordinate Mg(2+).

It belongs to the class-II aminoacyl-tRNA synthetase family. In terms of assembly, homodimer. It depends on Mg(2+) as a cofactor.

It is found in the cytoplasm. The enzyme catalyses tRNA(Lys) + L-lysine + ATP = L-lysyl-tRNA(Lys) + AMP + diphosphate. This chain is Lysine--tRNA ligase, found in Lactococcus lactis subsp. cremoris (strain SK11).